The chain runs to 580 residues: MSEITTTDAQAQPEKKDFIRQIIREDLAHGTHTHIHTRFPPEPNGYLHIGHAKAICLDFGVAAEFGGHCTLRMDDTNPSKEDPAFAAAIQEDVSWLGFHWNALRHTSDYFEVLYLAAEKLIADGKAYVCDLNSEQVREYRGTLTEAGRPSPWRERSPDENLELFRQMRAGTFPDGTRTLRAKIDMASGNINLRDPALYRIKHVEHQNTGNTWPIYPMYDFAHALSDAIEGITHSLCTLEFEDHRPLYDWCINHVDLPNNSHLLKPLLDKGFPQEPSQPRQIEFSRLNINYTVMSKRKLTALVDEKLVEGWDDPRMYTLQGLRRRGYTPAAMRLFVERIGISKQNSIIDFSVLENCLRENLDTIAPRRMATIAPMKLVLTNLPEDHEEQLIFPNHPKDDTQGTRTVPFSRELWIERDDFSEVPPKGWKRLVPGGEVRLRGAGIARIDEVVKNAEGHIIALHGWLDPTSRPGMEGAHRKVKGTIHWVSAPHAVAAEIRLYDRLFSIEKPDDNTDGKTYRDFLNPDSKRVVHGYIEPAAAQTAPEHAFQFERLGYFVTDRHDHDATHPVFNRSVTLRDTWQRD.

Residues 41–51 (PEPNGYLHIGH) carry the 'HIGH' region motif. Residues 42–44 (EPN) and 48–54 (HIGHAKA) contribute to the ATP site. L-glutamine contacts are provided by Asp-74 and Tyr-218. ATP-binding positions include Thr-237, 285 to 286 (RL), and 293 to 295 (MSK). The 'KMSKS' region signature appears at 292-296 (VMSKR).

Belongs to the class-I aminoacyl-tRNA synthetase family. In terms of assembly, monomer.

It localises to the cytoplasm. The catalysed reaction is tRNA(Gln) + L-glutamine + ATP = L-glutaminyl-tRNA(Gln) + AMP + diphosphate. This Xylella fastidiosa (strain M12) protein is Glutamine--tRNA ligase.